The primary structure comprises 195 residues: Dephospho-CoA kinase (195 aa).

One can recognise a DPCK domain in the interval 2-195; the sequence is IIGLTGGIGV…DIVDSLSLSS (194 aa). ATP is bound at residue 10 to 15; sequence GVGKSF.

The protein belongs to the CoaE family.

It localises to the cytoplasm. The catalysed reaction is 3'-dephospho-CoA + ATP = ADP + CoA + H(+). It functions in the pathway cofactor biosynthesis; coenzyme A biosynthesis; CoA from (R)-pantothenate: step 5/5. Functionally, catalyzes the phosphorylation of the 3'-hydroxyl group of dephosphocoenzyme A to form coenzyme A. The sequence is that of Dephospho-CoA kinase from Wolbachia sp. subsp. Brugia malayi (strain TRS).